Here is a 1521-residue protein sequence, read N- to C-terminus: Retroelement silencing factor 1 (1521 aa).

Residue K223 forms a Glycyl lysine isopeptide (Lys-Gly) (interchain with G-Cter in SUMO2) linkage. Residues 621-640 are disordered; it reads EKQHKPIQGDPDIADSSLGK. S910 carries the post-translational modification Phosphoserine. Residue T996 is modified to Phosphothreonine. Polar residues-rich tracts occupy residues 1093–1105 and 1124–1142; these read KNMPFSKQASQES and LSSNTDPCRSNTSSVQSVS. Disordered stretches follow at residues 1093–1147, 1204–1230, and 1312–1335; these read KNMP…EKKK, ERASVQEKTVPSPESSDPKGSSSKSTR, and EASRTHSVSNNNKGKFDGKQPDKM. S1142 bears the Phosphoserine mark. The span at 1214–1228 shows a compositional bias: low complexity; it reads PSPESSDPKGSSSKS. Residues 1325 to 1335 show a composition bias toward basic and acidic residues; sequence GKFDGKQPDKM. K1411 is covalently cross-linked (Glycyl lysine isopeptide (Lys-Gly) (interchain with G-Cter in SUMO2)). 2 disordered regions span residues 1425–1444 and 1457–1485; these read DKQDCPGPGPEKEQAPVQVS and IPTRTKMPESSQRDSADSRLSKRSLSADE. The span at 1467 to 1476 shows a compositional bias: basic and acidic residues; the sequence is SQRDSADSRL. Phosphoserine occurs at positions 1482 and 1514.

As to quaternary structure, interacts with SETDB1.

The protein resides in the nucleus. Functionally, plays a role in the regulation of imprinted gene expression, regulates repressive epigenetic modifications associated with SETDB1. Required for the recruitment or accumulation of SETDB1 to the endogenous retroviruses (ERVs) and maintenance of repressive chromatin configuration, contributing to a subset of the SETDB1-dependent ERV silencing in embryonic stem cells. In Mus musculus (Mouse), this protein is Retroelement silencing factor 1.